The following is an 899-amino-acid chain: Linoleate 13S-lipoxygenase 2-1, chloroplastic (899 aa).

The transit peptide at 1–40 (MLKPQLQQSSQSTKALIPSWNTNPLFLASFPINILNKNFR) directs the protein to the chloroplast. Residues 78–200 (VQKQVNLNLS…DNPDKRIFFT (123 aa)) form the PLAT domain. In terms of domain architecture, Lipoxygenase spans 203–899 (SYLPSQTPSG…GKGVPYSISI (697 aa)). The tract at residues 252 to 287 (SNNDDAKRPVLGGKELPYPRRCKTGRPRSKKDPLSE) is disordered. A compositionally biased stretch (basic residues) spans 271 to 280 (RRCKTGRPRS). 5 residues coordinate Fe cation: His557, His562, His749, Asn753, and Ile899.

The protein belongs to the lipoxygenase family. As to quaternary structure, monomer. Fe cation serves as cofactor. In terms of tissue distribution, expressed in leaves and floral buds.

Its subcellular location is the plastid. The protein localises to the chloroplast stroma. It is found in the chloroplast thylakoid. The enzyme catalyses (9Z,12Z)-octadecadienoate + O2 = (13S)-hydroperoxy-(9Z,11E)-octadecadienoate. It carries out the reaction (9Z,12Z,15Z)-octadecatrienoate + O2 = (13S)-hydroperoxy-(9Z,11E,15Z)-octadecatrienoate. It participates in lipid metabolism; oxylipin biosynthesis. Functionally, plant lipoxygenase involved in a number of diverse aspects of plant physiology including growth and development, pest resistance, and senescence. May not be involved in the bulk production of jasmonate upon wounding. Catalyzes the hydroperoxidation of lipids containing a cis,cis-1,4-pentadiene structure. Linolenic acid is the preferred substrate, before linoleic and arachidonic acids. Also has some activity with phosphatidylglycerol, but not with galactolipids. In Solanum tuberosum (Potato), this protein is Linoleate 13S-lipoxygenase 2-1, chloroplastic.